The sequence spans 501 residues: Putative matrix metalloproteinase (501 aa).

The N-terminal stretch at methionine 1–threonine 26 is a signal peptide. N-linked (GlcNAc...) asparagine; by host glycosylation is found at asparagine 48, asparagine 58, asparagine 61, asparagine 94, asparagine 116, and asparagine 163. Histidine 179 serves as a coordination point for Zn(2+). Glutamate 180 is an active-site residue. Histidine 183 and histidine 189 together coordinate Zn(2+). N-linked (GlcNAc...) asparagine; by host glycans are attached at residues asparagine 192, asparagine 267, asparagine 280, and asparagine 291. The stretch at threonine 311–proline 356 is one Hemopexin repeat. N-linked (GlcNAc...) asparagine; by host glycans are attached at residues asparagine 379 and asparagine 493.

It belongs to the peptidase M10A family. Requires Zn(2+) as cofactor.

This is Putative matrix metalloproteinase from Trichoplusia ni ascovirus 2c (TnAV-2c).